Reading from the N-terminus, the 436-residue chain is 3-oxo-tetronate kinase (436 aa).

Residues serine 272, 372-375 (GGET), and glycine 415 each bind ATP.

The protein belongs to the four-carbon acid sugar kinase family.

The catalysed reaction is 3-dehydro-L-erythronate + ATP = 3-dehydro-4-O-phospho-L-erythronate + ADP + H(+). The enzyme catalyses 3-dehydro-D-erythronate + ATP = 3-dehydro-4-O-phospho-D-erythronate + ADP + H(+). Functionally, catalyzes the ATP-dependent phosphorylation of 3-oxo-tetronate to 3-oxo-tetronate 4-phosphate. The sequence is that of 3-oxo-tetronate kinase from Brucella melitensis biotype 1 (strain ATCC 23456 / CCUG 17765 / NCTC 10094 / 16M).